The following is a 137-amino-acid chain: Peptide methionine sulfoxide reductase MsrB (137 aa).

Residues 7–129 (AEELKKNLSD…NSASLRFTDG (123 aa)) enclose the MsrB domain. Residues Cys46, Cys49, Cys95, and Cys98 each contribute to the Zn(2+) site. The Nucleophile role is filled by Cys118.

The protein belongs to the MsrB Met sulfoxide reductase family. Zn(2+) is required as a cofactor.

It carries out the reaction L-methionyl-[protein] + [thioredoxin]-disulfide + H2O = L-methionyl-(R)-S-oxide-[protein] + [thioredoxin]-dithiol. In Shigella dysenteriae serotype 1 (strain Sd197), this protein is Peptide methionine sulfoxide reductase MsrB.